Here is a 476-residue protein sequence, read N- to C-terminus: MAKNVTGRITQIMGPVVDVQFEGELPYILNALETRVGDRRLVLEVAQEIGERTVRCIAMDSTDGLARGDEVRDTGEAIAVPVGPETLGRILNVIGEPIDERGPIPTTRTAPIHRQAPSFDEQATSAEILVTGIKVVDLLAPYLKGGKIGLFGGAGVGKTVLIQELINNIAKGHGGVSVFAGVGERTREGNDLYHEMIDAGVIKLGEGTTEGSKVALVYGQMNEPPGARMRVGLSGLTMAEYFRDEEGQDVLFFVDNIFRFTQAGAEVSALLGRIPSAVGYQPTLATDMGALQERITSTKKGSITSVQAIYVPADDLTDPAPATSFSHLDATTTLNRAIAEKGIYPAVDPLDSTSRALDPRIVGEEHYNVAREVQRILQSYKSLQDIIAILGMDELSEDDKLTVARARKIERFLSQPFHVAEVFTGSPGIFVPVEDTVRSFKAICAGEYDHLPEAAFYMVGTIEDAVKKAESLNATA.

ATP is bound at residue 152 to 159 (GGAGVGKT).

It belongs to the ATPase alpha/beta chains family. In terms of assembly, F-type ATPases have 2 components, CF(1) - the catalytic core - and CF(0) - the membrane proton channel. CF(1) has five subunits: alpha(3), beta(3), gamma(1), delta(1), epsilon(1). CF(0) has three main subunits: a(1), b(2) and c(9-12). The alpha and beta chains form an alternating ring which encloses part of the gamma chain. CF(1) is attached to CF(0) by a central stalk formed by the gamma and epsilon chains, while a peripheral stalk is formed by the delta and b chains.

It is found in the cell inner membrane. The enzyme catalyses ATP + H2O + 4 H(+)(in) = ADP + phosphate + 5 H(+)(out). Functionally, produces ATP from ADP in the presence of a proton gradient across the membrane. The catalytic sites are hosted primarily by the beta subunits. In Acidiphilium cryptum (strain JF-5), this protein is ATP synthase subunit beta.